The following is a 343-amino-acid chain: NADH-quinone oxidoreductase subunit H (343 aa).

The next 8 helical transmembrane spans lie at 5–25 (FIIE…LMAM), 76–96 (FLFV…SAVI), 119–139 (ALLY…IGGW), 158–178 (VSYE…TGTL), 190–210 (MNWN…CAFA), 243–263 (LFAE…LFFG), 284–304 (ILGF…YMWV), and 323–343 (ILIP…LLFK).

The protein belongs to the complex I subunit 1 family. As to quaternary structure, NDH-1 is composed of 14 different subunits. Subunits NuoA, H, J, K, L, M, N constitute the membrane sector of the complex.

Its subcellular location is the cell inner membrane. The catalysed reaction is a quinone + NADH + 5 H(+)(in) = a quinol + NAD(+) + 4 H(+)(out). Its function is as follows. NDH-1 shuttles electrons from NADH, via FMN and iron-sulfur (Fe-S) centers, to quinones in the respiratory chain. The immediate electron acceptor for the enzyme in this species is believed to be ubiquinone. Couples the redox reaction to proton translocation (for every two electrons transferred, four hydrogen ions are translocated across the cytoplasmic membrane), and thus conserves the redox energy in a proton gradient. This subunit may bind ubiquinone. This Flavobacterium psychrophilum (strain ATCC 49511 / DSM 21280 / CIP 103535 / JIP02/86) protein is NADH-quinone oxidoreductase subunit H.